Reading from the N-terminus, the 195-residue chain is Large ribosomal subunit protein uL5 (195 aa).

Belongs to the universal ribosomal protein uL5 family. In terms of assembly, part of the 50S ribosomal subunit; part of the 5S rRNA/L5/L18/L25 subcomplex. Contacts the 5S rRNA and the P site tRNA. Forms a bridge to the 30S subunit in the 70S ribosome.

Its function is as follows. This is one of the proteins that bind and probably mediate the attachment of the 5S RNA into the large ribosomal subunit, where it forms part of the central protuberance. In the 70S ribosome it contacts protein S13 of the 30S subunit (bridge B1b), connecting the 2 subunits; this bridge is implicated in subunit movement. Contacts the P site tRNA; the 5S rRNA and some of its associated proteins might help stabilize positioning of ribosome-bound tRNAs. This Pelodictyon phaeoclathratiforme (strain DSM 5477 / BU-1) protein is Large ribosomal subunit protein uL5.